Here is a 245-residue protein sequence, read N- to C-terminus: OCIA domain-containing protein 1 (245 aa).

The region spanning 1–112 (MNGRADFREP…KKLENSPLGE (112 aa)) is the OCIA domain. Ser108, Ser116, Ser123, and Ser191 each carry phosphoserine. Disordered stretches follow at residues 111–141 (GEALRSGQARRSSPPGHYYQKSKYDSSVSGQ) and 169–245 (NESA…TWDE). Composition is skewed to basic and acidic residues over residues 190–210 (ESPKRKNITYEELRNKNRESY) and 224–238 (PMHERVPKKEVKVNK).

The protein belongs to the OCIAD1 family. In terms of assembly, interacts with OCIAD2. Interacts with STAT3. Isoform 1 is highly expressed in many tissues, including testis, brain, placenta, ovary, prostate and mammary gland. Isoform 2 expression is restricted to the central nervous system including brain, cerebellum and spinal cord.

The protein localises to the endosome. Its function is as follows. Maintains stem cell potency. Increases STAT3 phosphorylation and controls ERK phosphorylation. May act as a scaffold, increasing STAT3 recruitment onto endosomes. Involved in integrin-mediated cancer cell adhesion and colony formation in ovarian cancer. The sequence is that of OCIA domain-containing protein 1 from Homo sapiens (Human).